A 178-amino-acid polypeptide reads, in one-letter code: Large ribosomal subunit protein eL20w (178 aa).

It belongs to the eukaryotic ribosomal protein eL20 family.

This is Large ribosomal subunit protein eL20w (RPL18AD) from Arabidopsis thaliana (Mouse-ear cress).